A 127-amino-acid chain; its full sequence is Aspartate 1-decarboxylase (127 aa).

Ser-25 functions as the Schiff-base intermediate with substrate; via pyruvic acid in the catalytic mechanism. Ser-25 bears the Pyruvic acid (Ser) mark. Thr-57 is a binding site for substrate. Catalysis depends on Tyr-58, which acts as the Proton donor. 73 to 75 (GAA) is a substrate binding site.

The protein belongs to the PanD family. In terms of assembly, heterooctamer of four alpha and four beta subunits. The cofactor is pyruvate. Is synthesized initially as an inactive proenzyme, which is activated by self-cleavage at a specific serine bond to produce a beta-subunit with a hydroxyl group at its C-terminus and an alpha-subunit with a pyruvoyl group at its N-terminus.

It localises to the cytoplasm. The enzyme catalyses L-aspartate + H(+) = beta-alanine + CO2. It participates in cofactor biosynthesis; (R)-pantothenate biosynthesis; beta-alanine from L-aspartate: step 1/1. In terms of biological role, catalyzes the pyruvoyl-dependent decarboxylation of aspartate to produce beta-alanine. The chain is Aspartate 1-decarboxylase from Clostridium acetobutylicum (strain ATCC 824 / DSM 792 / JCM 1419 / IAM 19013 / LMG 5710 / NBRC 13948 / NRRL B-527 / VKM B-1787 / 2291 / W).